Consider the following 420-residue polypeptide: Gamma-glutamyl phosphate reductase (420 aa).

Belongs to the gamma-glutamyl phosphate reductase family.

The protein resides in the cytoplasm. The enzyme catalyses L-glutamate 5-semialdehyde + phosphate + NADP(+) = L-glutamyl 5-phosphate + NADPH + H(+). It participates in amino-acid biosynthesis; L-proline biosynthesis; L-glutamate 5-semialdehyde from L-glutamate: step 2/2. Its function is as follows. Catalyzes the NADPH-dependent reduction of L-glutamate 5-phosphate into L-glutamate 5-semialdehyde and phosphate. The product spontaneously undergoes cyclization to form 1-pyrroline-5-carboxylate. The chain is Gamma-glutamyl phosphate reductase from Neisseria meningitidis serogroup C (strain 053442).